The following is a 388-amino-acid chain: 3-sulfinopropanoyl-CoA desulfinase (388 aa).

FAD contacts are provided by residues 121-124 (ICIT), Ser130, and 153-156 (HWIT). 240-241 (YN) serves as a coordination point for substrate. FAD is bound by residues Arg269, Gln336, 363-367 (GGTAQ), and Gln384.

This sequence belongs to the acyl-CoA dehydrogenase family. Homotrimer or homotetramer. The cofactor is FAD.

The enzyme catalyses 3-sulfinopropanoyl-CoA + H2O = propanoyl-CoA + sulfite + H(+). Functionally, catalyzes the conversion 3-sulfinopropanoyl-CoA (3SP-CoA) to propanoyl-CoA by abstraction of sulfite. Does not show dehydrogenase activity. This Paraburkholderia xenovorans (strain LB400) protein is 3-sulfinopropanoyl-CoA desulfinase.